A 910-amino-acid polypeptide reads, in one-letter code: Disease resistance protein RPH8A (910 aa).

Residues 15–57 are a coiled coil; it reads DLLSRESERLQGIDEQLDGLKRQLRSLQSLLKDADAKKHGSDR. The NB-ARC domain occupies 146 to 459; it reads RQRVQREIRQ…AEGIYDGSTI (314 aa). 192–199 is an ATP binding site; it reads GMGGIGKT.

The protein belongs to the disease resistance NB-LRR family. RPP8/HRT subfamily.

Disease resistance protein. Resistance proteins guard the plant against pathogens that contain an appropriate avirulence protein via an indirect interaction with this avirulence protein. That triggers a defense system including the hypersensitive response, which restricts the pathogen growth. In contrast to RPP8, it does not specifically recognize the Emco5 avirulence protein from Hyaloperonospora parasitica. This is Disease resistance protein RPH8A (RPH8A) from Arabidopsis thaliana (Mouse-ear cress).